We begin with the raw amino-acid sequence, 250 residues long: Small ribosomal subunit protein uS3 (250 aa).

One can recognise a KH type-2 domain in the interval 39 to 111 (IRTLIKNHYP…KIQINIFEVK (73 aa)).

This sequence belongs to the universal ribosomal protein uS3 family. Part of the 30S ribosomal subunit. Forms a tight complex with proteins S10 and S14.

Binds the lower part of the 30S subunit head. Binds mRNA in the 70S ribosome, positioning it for translation. This chain is Small ribosomal subunit protein uS3, found in Elm witches'-broom phytoplasma.